Consider the following 227-residue polypeptide: ATP synthase F(0) complex subunit a (227 aa).

The next 6 membrane-spanning stretches (helical) occupy residues 14–34 (YLGI…FPLP), 69–89 (WALL…LGLL), 98–118 (QLSL…IIGL), 132–152 (EGTP…SLFI), 179–199 (VFVL…VLFL), and 202–222 (LLEV…LSLY).

This sequence belongs to the ATPase A chain family. In terms of assembly, component of the ATP synthase complex composed at least of ATP5F1A/subunit alpha, ATP5F1B/subunit beta, ATP5MC1/subunit c (homooctomer), MT-ATP6/subunit a, MT-ATP8/subunit 8, ATP5ME/subunit e, ATP5MF/subunit f, ATP5MG/subunit g, ATP5MK/subunit k, ATP5MJ/subunit j, ATP5F1C/subunit gamma, ATP5F1D/subunit delta, ATP5F1E/subunit epsilon, ATP5PF/subunit F6, ATP5PB/subunit b, ATP5PD/subunit d, ATP5PO/subunit OSCP. ATP synthase complex consists of a soluble F(1) head domain (subunits alpha(3) and beta(3)) - the catalytic core - and a membrane F(0) domain - the membrane proton channel (subunits c, a, 8, e, f, g, k and j). These two domains are linked by a central stalk (subunits gamma, delta, and epsilon) rotating inside the F1 region and a stationary peripheral stalk (subunits F6, b, d, and OSCP). Interacts with DNAJC30; interaction is direct.

Its subcellular location is the mitochondrion inner membrane. The enzyme catalyses H(+)(in) = H(+)(out). Its function is as follows. Subunit a, of the mitochondrial membrane ATP synthase complex (F(1)F(0) ATP synthase or Complex V) that produces ATP from ADP in the presence of a proton gradient across the membrane which is generated by electron transport complexes of the respiratory chain. ATP synthase complex consist of a soluble F(1) head domain - the catalytic core - and a membrane F(1) domain - the membrane proton channel. These two domains are linked by a central stalk rotating inside the F(1) region and a stationary peripheral stalk. During catalysis, ATP synthesis in the catalytic domain of F(1) is coupled via a rotary mechanism of the central stalk subunits to proton translocation. With the subunit c (ATP5MC1), forms the proton-conducting channel in the F(0) domain, that contains two crucial half-channels (inlet and outlet) that facilitate proton movement from the mitochondrial intermembrane space (IMS) into the matrix. Protons are taken up via the inlet half-channel and released through the outlet half-channel, following a Grotthuss mechanism. The chain is ATP synthase F(0) complex subunit a from Formosania lacustris (Oriental stream loach).